The following is a 647-amino-acid chain: Protein INVOLVED IN DE NOVO 2 (647 aa).

Disordered regions lie at residues 1–20 and 101–123; these read MGST…SESE and SASE…DCDH. The span at 9-20 shows a compositional bias: acidic residues; it reads SDDEDSDISESE. A coiled-coil region spans residues 253–508; sequence IAELTEEEAR…NIMKEWNTNI (256 aa).

Interacts with FMD1/IDNL1. Forms a complex with FMD1/IDNL1 and FMD2/INDL2. Can form homodimers. Interacts with MORC6.

Forms a complex with FDM1/IDNL1 and FDM2/IDNL2 that is required for RNA-directed DNA methylation (RdDM) and that functions at a downstream step of the RdDM pathway and downstream of small interfering RNA (siRNA) formation. Required for de novo DNA methylation, siRNA accumulation and siRNA-mediated maintenance methylation. Required for several post-transcriptional gene silencing pathways. Binds double-stranded RNAs (dsRNAs) with 5'-overhangs through its XS domain. Binds long non-coding RNA (lncRNA) in an AGO4-dependent manner and associates with DRM2, resulting in DNA methylation of RdDM target loci. Mediates the silencing of a subset of MORC6 target loci. The sequence is that of Protein INVOLVED IN DE NOVO 2 from Arabidopsis thaliana (Mouse-ear cress).